Reading from the N-terminus, the 297-residue chain is Acetyl-coenzyme A carboxylase carboxyl transferase subunit beta (297 aa).

Residues 27–296 enclose the CoA carboxyltransferase N-terminal domain; it reads LWHKCPACEA…PEQAREAAAV (270 aa). Residues C31, C34, C50, and C53 each contribute to the Zn(2+) site. The C4-type zinc finger occupies 31–53; that stretch reads CPACEAVLYRPELEKTLDVCPKC.

Belongs to the AccD/PCCB family. As to quaternary structure, acetyl-CoA carboxylase is a heterohexamer composed of biotin carboxyl carrier protein (AccB), biotin carboxylase (AccC) and two subunits each of ACCase subunit alpha (AccA) and ACCase subunit beta (AccD). It depends on Zn(2+) as a cofactor.

Its subcellular location is the cytoplasm. It catalyses the reaction N(6)-carboxybiotinyl-L-lysyl-[protein] + acetyl-CoA = N(6)-biotinyl-L-lysyl-[protein] + malonyl-CoA. The protein operates within lipid metabolism; malonyl-CoA biosynthesis; malonyl-CoA from acetyl-CoA: step 1/1. Component of the acetyl coenzyme A carboxylase (ACC) complex. Biotin carboxylase (BC) catalyzes the carboxylation of biotin on its carrier protein (BCCP) and then the CO(2) group is transferred by the transcarboxylase to acetyl-CoA to form malonyl-CoA. The chain is Acetyl-coenzyme A carboxylase carboxyl transferase subunit beta from Pseudomonas putida (strain W619).